A 273-amino-acid polypeptide reads, in one-letter code: Type III pantothenate kinase (273 aa).

ATP is bound at residue 5 to 12; it reads DVGNSHVV. Substrate is bound at residue 112 to 115; that stretch reads GTDL. Aspartate 114 acts as the Proton acceptor in catalysis. Position 134 (aspartate 134) interacts with K(+). Residue threonine 137 coordinates ATP. Threonine 189 lines the substrate pocket.

It belongs to the type III pantothenate kinase family. In terms of assembly, homodimer. Requires NH4(+) as cofactor. K(+) is required as a cofactor.

It localises to the cytoplasm. It catalyses the reaction (R)-pantothenate + ATP = (R)-4'-phosphopantothenate + ADP + H(+). It functions in the pathway cofactor biosynthesis; coenzyme A biosynthesis; CoA from (R)-pantothenate: step 1/5. Its function is as follows. Catalyzes the phosphorylation of pantothenate (Pan), the first step in CoA biosynthesis. The sequence is that of Type III pantothenate kinase from Treponema pallidum subsp. pallidum (strain SS14).